Here is a 150-residue protein sequence, read N- to C-terminus: Ribosome maturation factor RimP (150 aa).

Belongs to the RimP family.

It is found in the cytoplasm. Required for maturation of 30S ribosomal subunits. This Hahella chejuensis (strain KCTC 2396) protein is Ribosome maturation factor RimP.